Consider the following 224-residue polypeptide: Urease accessory protein UreF (224 aa).

This sequence belongs to the UreF family. In terms of assembly, ureD, UreF and UreG form a complex that acts as a GTP-hydrolysis-dependent molecular chaperone, activating the urease apoprotein by helping to assemble the nickel containing metallocenter of UreC. The UreE protein probably delivers the nickel.

Its subcellular location is the cytoplasm. Functionally, required for maturation of urease via the functional incorporation of the urease nickel metallocenter. This Pseudomonas putida (strain ATCC 700007 / DSM 6899 / JCM 31910 / BCRC 17059 / LMG 24140 / F1) protein is Urease accessory protein UreF.